The chain runs to 1191 residues: MASQVLVYPPYVYQTQSSAFCSVKKLKVEPSGCVFQERACPQIHVNGRHFGNPLPSTKGSAFQTKIPFSKPRGHSFSLQAGAIVVKDTAGATKVIAAQAQQAGVEAPRAVVWRNRLHFLGGPQRCGLKRKSEELDNHSGAMQIVDELSILPAMLQTNMGNPVTVVTATTGSKQNCTSGEGDYQLVQHEVLCSVKNTYEVLDFLGRGTFGQVVKCWKRGTNEIVAIKILKNHPSYARQGQIEVSILARLSTENADEYNFVRAYECFQHRNHTCLVFEMLEQNLYDFLKQNKFSPLPLKVIRPVLQQVATALKKLKSLGLIHADLKPENIMLVDPVRQPYRVKVIDFGSASHVSKTVCSTYLQSRYYRAPEIILGLPFCEAIDMWSLGCVIAELFLGWPLYPGALEYDQIRYISQTQGLPGEQLLNVGTKSTRFFCRETDMSHSGWRLKTLEEHEAETGMKSKEARKYIFNSLDDIVHVNTVMDLEGSDLLAEKADRREFVSLLKKMLLIDADLRITPIETLNHPFVSMKHLLDFPHSSHVKSCFHIMDICKSPSSCETNNHSKMSLLRPVASNGTAALAANFTKVGTLRSQALTTSAHSVVHHGIPLQAGTAQFGCGDAFHQTLIICPPAIQGIPAAHGKPTSYSIRVDNTVPLVTQAPAVQPLQIRPGVLSQTWSGRTQQMLIPAWQQVTPMAPAAATLTSEGMAGSQRLGDWGKMIPHSNHYNSVMPPPLLTNQITLSAPQPISVGIAHVVWPQPATTKKNKLCQNRSNSLQNTNVPHSAFISPKIISGKEVEEVSCVETQDNHTSEGEARTCHEASVRQDSSVSDKQRQTIIIADSPSPAVSVITISSDTDDEETSPRPSLRECKGSLDCEACQSTLNIDRMCSLSSPDSTLSTSSSGQSSPSPCKRPNSMSDDEQESGCETVDGSPTSDSSGHDSPFAESSFVEDTPQNPELGTCAGTEAKPALSTAVEPPVGTERGLNVDAHMANTDSTCQPLTKGQPAPGKLNQPSASAARQQKPTSAFQQQHLNLSQVQHFGTGHQEWNGNFGHRRQQAYIPTSVTSNPFTLSHGSPNHTAVHAHLAGSAHLGGQPTLLPYPPSTALSSAAPVAHLLASPCTSRPMLQHPTYNISHPSGIVHQVPVGINPRLLPSPTIHQTQYKPIFPPHSYIAASPAYTGFPLSPTKLSQYPYM.

Lys27 is covalently cross-linked (Glycyl lysine isopeptide (Lys-Gly) (interchain with G-Cter in SUMO2)). In terms of domain architecture, Protein kinase spans 197 to 525 (YEVLDFLGRG…PIETLNHPFV (329 aa)). ATP is bound by residues 203–211 (LGRGTFGQV) and Lys226. Residue Asp322 is the Proton acceptor of the active site. The residue at position 359 (Tyr359) is a Phosphotyrosine. The segment at 766–920 (QNRSNSLQNT…NSMSDDEQES (155 aa)) is interaction with AR. The segment at 774–867 (NTNVPHSAFI…SPRPSLRECK (94 aa)) is interaction with FAS. Residues 801-828 (TQDNHTSEGEARTCHEASVRQDSSVSDK) are disordered. A compositionally biased stretch (basic and acidic residues) spans 802 to 828 (QDNHTSEGEARTCHEASVRQDSSVSDK). Residues 846-856 (ITISSDTDDEE) are interaction with UBL1. The span at 888–905 (SSPDSTLSTSSSGQSSPS) shows a compositional bias: low complexity. 2 disordered regions span residues 888–960 (SSPD…TCAG) and 993–1022 (TCQP…KPTS). The segment covering 1008 to 1022 (NQPSASAARQQKPTS) has biased composition (polar residues).

Belongs to the protein kinase superfamily. CMGC Ser/Thr protein kinase family. HIPK subfamily. Interacts with Nkx1-2. Interacts with FAS and DAXX. Probably part of a complex consisting of HIPK3, FAS and FADD. Interacts with UBL1/SUMO-1. Interacts with and stabilizes ligand-bound androgen receptor (AR). Post-translationally, autophosphorylated. Autophosphorylation is not required for catalytic activity. In terms of processing, may be sumoylated.

The protein localises to the nucleus. The enzyme catalyses L-seryl-[protein] + ATP = O-phospho-L-seryl-[protein] + ADP + H(+). It catalyses the reaction L-threonyl-[protein] + ATP = O-phospho-L-threonyl-[protein] + ADP + H(+). Its function is as follows. Seems to negatively regulate apoptosis by promoting FADD phosphorylation. Enhances androgen receptor-mediated transcription. May act as a transcriptional corepressor for NK homeodomain transcription factors. The chain is Homeodomain-interacting protein kinase 3 (Hipk3) from Rattus norvegicus (Rat).